Reading from the N-terminus, the 193-residue chain is Peptide deformylase (193 aa).

The Fe cation site is built by Cys111 and His155. Glu156 is a catalytic residue. Position 159 (His159) interacts with Fe cation.

It belongs to the polypeptide deformylase family. It depends on Fe(2+) as a cofactor.

The enzyme catalyses N-terminal N-formyl-L-methionyl-[peptide] + H2O = N-terminal L-methionyl-[peptide] + formate. Removes the formyl group from the N-terminal Met of newly synthesized proteins. Requires at least a dipeptide for an efficient rate of reaction. N-terminal L-methionine is a prerequisite for activity but the enzyme has broad specificity at other positions. The polypeptide is Peptide deformylase (Mycoplasma genitalium (strain ATCC 33530 / DSM 19775 / NCTC 10195 / G37) (Mycoplasmoides genitalium)).